The primary structure comprises 203 residues: Guanylate kinase (203 aa).

The Guanylate kinase-like domain maps to 3–181 (GTLYIVAAPS…AVSEMCAIFT (179 aa)). 10–17 (APSGAGKS) serves as a coordination point for ATP.

This sequence belongs to the guanylate kinase family.

The protein resides in the cytoplasm. It carries out the reaction GMP + ATP = GDP + ADP. Functionally, essential for recycling GMP and indirectly, cGMP. The chain is Guanylate kinase from Xanthomonas axonopodis pv. citri (strain 306).